Here is a 713-residue protein sequence, read N- to C-terminus: Probable muscarinic acetylcholine receptor gar-1 (713 aa).

The Extracellular portion of the chain corresponds to 1–20; it reads MPNYTVPPDPADTSWDSPYS. Residue Asn3 is glycosylated (N-linked (GlcNAc...) asparagine). Residues 21-41 form a helical membrane-spanning segment; the sequence is IPVQIVVWIIIIVLSLETIIG. Residues 42–66 lie on the Cytoplasmic side of the membrane; that stretch reads NAMVVMAYRIERNISKQVSNRYIVS. A helical membrane pass occupies residues 67–87; that stretch reads LAISDLIIGIEGFPFFTVYVL. Over 88–101 the chain is Extracellular; that stretch reads NGDRWPLGWVACQT. An intrachain disulfide couples Cys99 to Cys180. A helical transmembrane segment spans residues 102–122; the sequence is WLFLDYTLCLVSILTVLLITA. The Cytoplasmic segment spans residues 123–144; the sequence is DRYLSVCHTAKYLKWQSPTKTQ. The helical transmembrane segment at 145 to 165 threads the bilayer; that stretch reads LLIVMSWLLPAIIFGIMIYGW. Residues 166–189 are Extracellular-facing; sequence QAMTGQSTSMSGAECSAPFLSNPY. The helical transmembrane segment at 190–210 threads the bilayer; sequence VNMGMYVAYYWTTLVAMLILY. Residues 211-633 are Cytoplasmic-facing; that stretch reads KGIHQAAKNL…QTKAEKRAHK (423 aa). Disordered regions lie at residues 256–350, 381–403, 427–475, and 515–585; these read KEKA…SRRC, SRYS…VEKA, KNTD…KQAE, and LIRR…TDTF. Composition is skewed to polar residues over residues 266–275 and 287–315; these read SGYTSNQAGD and PETS…NDQN. Composition is skewed to basic and acidic residues over residues 320–333 and 393–403; these read EEER…RESN and HENDEKEVEKA. Residues 429-439 are compositionally biased toward low complexity; it reads TDSNNDSDTTS. Residues 444-457 show a composition bias toward basic residues; sequence RSRKYKKNKRPRSS. The segment covering 557–571 has biased composition (polar residues); sequence LTVNNENRGETSSQP. Residues 634-656 form a helical membrane-spanning segment; the sequence is AFRTITFIVGFFAILWSPYYIMA. Residues 657–670 lie on the Extracellular side of the membrane; that stretch reads TVYGFCKGECIPSF. The chain crosses the membrane as a helical span at residues 671–693; that stretch reads LYTLSYYMCYLNSSGNPFAYALA. Topologically, residues 694–713 are cytoplasmic; sequence NRQFRSAFMRMFRGNFNKVA.

Belongs to the G-protein coupled receptor 1 family. Muscarinic acetylcholine receptor subfamily. As to expression, expressed in head region of the larva. In adults, expression is seen in the periventricularis magnocellularis (PVM) neuron.

It localises to the cell membrane. The muscarinic acetylcholine receptor mediates various cellular responses, including inhibition of adenylate cyclase, breakdown of phosphoinositides and modulation of potassium channels through the action of G proteins. Primary transducing effect is Pi turnover. This is Probable muscarinic acetylcholine receptor gar-1 (gar-1) from Caenorhabditis elegans.